Reading from the N-terminus, the 174-residue chain is Peptide methionine sulfoxide reductase MsrA (174 aa).

Residue Cys-11 is part of the active site.

It belongs to the MsrA Met sulfoxide reductase family.

The catalysed reaction is L-methionyl-[protein] + [thioredoxin]-disulfide + H2O = L-methionyl-(S)-S-oxide-[protein] + [thioredoxin]-dithiol. The enzyme catalyses [thioredoxin]-disulfide + L-methionine + H2O = L-methionine (S)-S-oxide + [thioredoxin]-dithiol. Has an important function as a repair enzyme for proteins that have been inactivated by oxidation. Catalyzes the reversible oxidation-reduction of methionine sulfoxide in proteins to methionine. This chain is Peptide methionine sulfoxide reductase MsrA, found in Pasteurella multocida (strain Pm70).